The sequence spans 168 residues: Gastrula zinc finger protein XlCGF42.1 (168 aa).

6 consecutive C2H2-type zinc fingers follow at residues 6–28, 34–56, 62–84, 90–112, 118–140, and 146–165; these read YSCSDCGKCFTRRWNLSEHRKSH, FCCSVCGKGFSYHSQMKSHYRTH, CICSECGKSFTDHAGLRIHQKYH, FSCSECGKCFTRRSGLTAHLRIH, YTCTECGKCFTCRTDLARHLRIH, and FTCSQCEKSFASHSDLDRHH.

This sequence belongs to the krueppel C2H2-type zinc-finger protein family.

Its subcellular location is the nucleus. In terms of biological role, may be involved in transcriptional regulation. The sequence is that of Gastrula zinc finger protein XlCGF42.1 from Xenopus laevis (African clawed frog).